Reading from the N-terminus, the 549-residue chain is Formate--tetrahydrofolate ligase (549 aa).

Residue 60 to 67 (TPYGEGKT) coordinates ATP.

This sequence belongs to the formate--tetrahydrofolate ligase family.

The enzyme catalyses (6S)-5,6,7,8-tetrahydrofolate + formate + ATP = (6R)-10-formyltetrahydrofolate + ADP + phosphate. Its pathway is one-carbon metabolism; tetrahydrofolate interconversion. This chain is Formate--tetrahydrofolate ligase, found in Campylobacter concisus (strain 13826).